Reading from the N-terminus, the 478-residue chain is Antiviral innate immune response effector IFIT1 (478 aa).

6 TPR repeats span residues 52–85, 95–128, 139–174, 183–216, 218–249, and 251–284; these read VGIH…MQKE, LVTW…CKKP, PEID…DHEN, ISAY…NPDN, YLKV…NMSS, and TYVF…TPTS. Tryptophan 147 contacts mRNA. Position 190 (glycine 190) interacts with RNA. Positions 259, 289, 290, and 336 each coordinate RNA. 4 TPR repeats span residues 305–339, 340–373, 378–412, and 437–470; these read ATKG…KPTF, EVAH…KPVV, QDIH…EQTS, and LESL…AADF.

Belongs to the IFIT family. Component of an interferon-dependent multiprotein complex, at least composed of IFIT1, IFIT2 and IFIT3. Interacts (via TPR repeats 1-4) with RPL15. Interacts with STING1/MITA; could disrupt STING1 interaction with MAVS or TBK1, acting as a negative-feedback regulator of virus-triggered signaling. Interacts with EIF3E; this could be an alternative way to inhibit translation. Phosphorylated. In terms of processing, ISGylated.

It is found in the cytoplasm. Plays a key role in the innate immune response as part of an interferon-dependent multiprotein complex, recognizing and sequestering viral RNAs that lack host-specific 2'-O-methylation at their 5' cap. By distinguishing these RNAs from host mRNAs, inhibits their translation by competing with the translation initiation factor eIF4E. Could also prevent viral replication through its interaction with DNA replication origin-binding protein E1 of several viruses. Causes the translocation of E1 from the nucleus to the cytoplasm and can also inhibit its helicase activity in vitro. This is Antiviral innate immune response effector IFIT1 from Macaca fascicularis (Crab-eating macaque).